Reading from the N-terminus, the 110-residue chain is Protein RALF-like 19 (110 aa).

Positions Met-1 to Ala-23 are cleaved as a signal peptide. A propeptide spans Thr-24–Ala-58 (removed in mature form). 2 disulfide bridges follow: Cys-76–Cys-86 and Cys-99–Cys-105.

This sequence belongs to the plant rapid alkalinization factor (RALF) family. Proteolytically cleaved, probably by S1P, a subtilisin-like serine protease (subtilase).

Its subcellular location is the secreted. In terms of biological role, cell signaling peptide that may regulate plant stress, growth, and development. Mediates a rapid alkalinization of extracellular space by mediating a transient increase in the cytoplasmic Ca(2+) concentration leading to a calcium-dependent signaling events through a cell surface receptor and a concomitant activation of some intracellular mitogen-activated protein kinases. This Arabidopsis thaliana (Mouse-ear cress) protein is Protein RALF-like 19 (RALFL19).